The following is a 310-amino-acid chain: Methionyl-tRNA formyltransferase (310 aa).

(6S)-5,6,7,8-tetrahydrofolate is bound at residue 110–113 (SLLP).

It belongs to the Fmt family.

The enzyme catalyses L-methionyl-tRNA(fMet) + (6R)-10-formyltetrahydrofolate = N-formyl-L-methionyl-tRNA(fMet) + (6S)-5,6,7,8-tetrahydrofolate + H(+). Its function is as follows. Attaches a formyl group to the free amino group of methionyl-tRNA(fMet). The formyl group appears to play a dual role in the initiator identity of N-formylmethionyl-tRNA by promoting its recognition by IF2 and preventing the misappropriation of this tRNA by the elongation apparatus. This is Methionyl-tRNA formyltransferase from Streptomyces coelicolor (strain ATCC BAA-471 / A3(2) / M145).